The following is a 301-amino-acid chain: Thymidylate synthase (301 aa).

DUMP is bound by residues Arg38 and 163 to 164 (RR). The Nucleophile role is filled by Cys183. DUMP contacts are provided by residues 203–206 (RSGD), Asn214, and 244–246 (HIY). Residue Asp206 coordinates (6R)-5,10-methylene-5,6,7,8-tetrahydrofolate. Ala300 contributes to the (6R)-5,10-methylene-5,6,7,8-tetrahydrofolate binding site.

The protein belongs to the thymidylate synthase family. Homodimer.

The catalysed reaction is dUMP + (6R)-5,10-methylene-5,6,7,8-tetrahydrofolate = 7,8-dihydrofolate + dTMP. It participates in pyrimidine metabolism; dTTP biosynthesis. Its function is as follows. Catalyzes the reductive methylation of deoxyuridylate to thymidylate. The protein is Thymidylate synthase of Varicella-zoster virus (strain Dumas) (HHV-3).